We begin with the raw amino-acid sequence, 506 residues long: MEEIQRYLQLERSQQHDFLYPLILQEYIYAFAHDRGFGRSILSEKSGYDNKSSLLIVKRLITRMYQQNHFLISPNDSNQNPFWARNNNLYSQIISEGFAFIVEIPFSLQLISCLEGKKIVKSQNLRSIHSIFPFLEDNFSHLNFVLDILIPHPVHVEILVQTLRYWVKDAASLHLLRFFLNEYCKWNSLITPKKASSSFSKRNQRLFLFLYNSHVCEYEAIFVFLRNQSSHLRSTSSGVLLERIYFYGKIERLVNVFVKVKDFQANLWLVKEPCMHYIRYQRKSILASKGTSLFMNKWKCYLVTFWQWHFSLWFHPRRIYINQLSNHSLEFLGYLSSVRMNPSVVRSQILENSFLINNAIKKFDTLVPIIPLIASLAKVKFCNVLGHPISKPVRADLSDSNIIDRFGRICRNLSHYHSGSSNKKSLYRIKYILRLSCARTLARKHKSTVRAFLKRLGSELLEEFLMSEEDVLFLTFPKVSSTLRGVYRSRIWYLDIVAINDLANHK.

It belongs to the intron maturase 2 family. MatK subfamily.

The protein localises to the plastid. The protein resides in the chloroplast. In terms of biological role, usually encoded in the trnK tRNA gene intron. Probably assists in splicing its own and other chloroplast group II introns. The polypeptide is Maturase K (Uncarina grandidieri (Mouse trap tree)).